Here is a 92-residue protein sequence, read N- to C-terminus: Small ribosomal subunit protein uS19 (92 aa).

Belongs to the universal ribosomal protein uS19 family.

Its function is as follows. Protein S19 forms a complex with S13 that binds strongly to the 16S ribosomal RNA. The protein is Small ribosomal subunit protein uS19 of Rickettsia canadensis (strain McKiel).